The following is a 157-amino-acid chain: Crossover junction endodeoxyribonuclease RuvC (157 aa).

Catalysis depends on residues Asp-7, Glu-66, and Asp-139. 3 residues coordinate Mg(2+): Asp-7, Glu-66, and Asp-139.

Belongs to the RuvC family. In terms of assembly, homodimer which binds Holliday junction (HJ) DNA. The HJ becomes 2-fold symmetrical on binding to RuvC with unstacked arms; it has a different conformation from HJ DNA in complex with RuvA. In the full resolvosome a probable DNA-RuvA(4)-RuvB(12)-RuvC(2) complex forms which resolves the HJ. Requires Mg(2+) as cofactor.

Its subcellular location is the cytoplasm. It catalyses the reaction Endonucleolytic cleavage at a junction such as a reciprocal single-stranded crossover between two homologous DNA duplexes (Holliday junction).. Functionally, the RuvA-RuvB-RuvC complex processes Holliday junction (HJ) DNA during genetic recombination and DNA repair. Endonuclease that resolves HJ intermediates. Cleaves cruciform DNA by making single-stranded nicks across the HJ at symmetrical positions within the homologous arms, yielding a 5'-phosphate and a 3'-hydroxyl group; requires a central core of homology in the junction. The consensus cleavage sequence is 5'-(A/T)TT(C/G)-3'. Cleavage occurs on the 3'-side of the TT dinucleotide at the point of strand exchange. HJ branch migration catalyzed by RuvA-RuvB allows RuvC to scan DNA until it finds its consensus sequence, where it cleaves and resolves the cruciform DNA. The protein is Crossover junction endodeoxyribonuclease RuvC of Helicobacter pylori (strain Shi470).